Reading from the N-terminus, the 315-residue chain is 4-diphosphocytidyl-2-C-methyl-D-erythritol kinase (315 aa).

Residue Lys11 is part of the active site. 99-109 (PMAAGLAGGSA) contributes to the ATP binding site. Asp141 is a catalytic residue.

The protein belongs to the GHMP kinase family. IspE subfamily.

It carries out the reaction 4-CDP-2-C-methyl-D-erythritol + ATP = 4-CDP-2-C-methyl-D-erythritol 2-phosphate + ADP + H(+). It participates in isoprenoid biosynthesis; isopentenyl diphosphate biosynthesis via DXP pathway; isopentenyl diphosphate from 1-deoxy-D-xylulose 5-phosphate: step 3/6. Its function is as follows. Catalyzes the phosphorylation of the position 2 hydroxy group of 4-diphosphocytidyl-2C-methyl-D-erythritol. The protein is 4-diphosphocytidyl-2-C-methyl-D-erythritol kinase of Synechocystis sp. (strain ATCC 27184 / PCC 6803 / Kazusa).